The chain runs to 358 residues: Methionine aminopeptidase 2 (358 aa).

H109 is a binding site for substrate. The a divalent metal cation site is built by D130, D141, and H210. H218 is a substrate binding site. Residues E243 and E339 each coordinate a divalent metal cation.

This sequence belongs to the peptidase M24A family. Methionine aminopeptidase eukaryotic type 2 subfamily. Co(2+) serves as cofactor. It depends on Zn(2+) as a cofactor. Mn(2+) is required as a cofactor. The cofactor is Fe(2+).

It localises to the cytoplasm. The enzyme catalyses Release of N-terminal amino acids, preferentially methionine, from peptides and arylamides.. Its activity is regulated as follows. Irreversibly inhibited by the fungal metabolite fumagillin and the fumagillin analog TNP470, antiangiogenic drugs. Functionally, cotranslationally removes the N-terminal methionine from nascent proteins. The N-terminal methionine is often cleaved when the second residue in the primary sequence is small and uncharged (Met-Ala-, Cys, Gly, Pro, Ser, Thr, or Val). The chain is Methionine aminopeptidase 2 from Encephalitozoon hellem (strain ATCC 50504) (Microsporidian parasite).